We begin with the raw amino-acid sequence, 446 residues long: Methionine aminopeptidase 2 (446 aa).

The tract at residues 1 to 85 (MAGVTEGEDT…KNKKKKKKKI (85 aa)) is disordered. The segment covering 8–32 (EDTKVIESKINELNIDKPKLEDNNE) has biased composition (basic and acidic residues). Positions 42–58 (SGDDDDDDKEEDDDNEI) are enriched in acidic residues. Over residues 73–85 (KKNKNKKKKKKKI) the composition is skewed to basic residues. Histidine 197 lines the substrate pocket. Residues aspartate 217, aspartate 228, and histidine 299 each coordinate a divalent metal cation. Histidine 307 is a binding site for substrate. A divalent metal cation contacts are provided by glutamate 332 and glutamate 427.

It belongs to the peptidase M24A family. Methionine aminopeptidase eukaryotic type 2 subfamily. The cofactor is Co(2+). Requires Zn(2+) as cofactor. Mn(2+) is required as a cofactor. Fe(2+) serves as cofactor.

It localises to the cytoplasm. It catalyses the reaction Release of N-terminal amino acids, preferentially methionine, from peptides and arylamides.. Its function is as follows. Cotranslationally removes the N-terminal methionine from nascent proteins. The N-terminal methionine is often cleaved when the second residue in the primary sequence is small and uncharged (Met-Ala-, Cys, Gly, Pro, Ser, Thr, or Val). This Candida albicans (strain SC5314 / ATCC MYA-2876) (Yeast) protein is Methionine aminopeptidase 2.